Reading from the N-terminus, the 583-residue chain is Torsin-1A-interacting protein 1 (583 aa).

The Nuclear portion of the chain corresponds to 1-339; that stretch reads MAGERWRAEG…DESSVKIKWW (339 aa). Positions 23–208 are disordered; it reads APIREGRRRL…PPLRSPRPDA (186 aa). S60 is modified (phosphoserine). Basic and acidic residues-rich tracts occupy residues 70–101 and 115–132; these read FEPRAAKERSPGERRTPPEKFRSDSAKEEVRE and GPQEAEEMKTRRSTRLEQ. Phosphoserine occurs at positions 134, 142, 155, and 157. Residues 166–188 are compositionally biased toward polar residues; that stretch reads SSQPVTSQTVSKKTVRTPETSVM. The residue at position 189 (S189) is a Phosphoserine. Residue T222 is modified to Phosphothreonine. 3 positions are modified to phosphoserine: S228, S231, and S242. K309 participates in a covalent cross-link: Glycyl lysine isopeptide (Lys-Gly) (interchain with G-Cter in SUMO2). Residue S316 is modified to Phosphoserine. Residues 340–360 form a helical membrane-spanning segment; sequence LLILVAALAMGIYWFFHTPVV. The interval 356 to 583 is interaction with TOR1A; that stretch reads HTPVVETTAV…ENALKAGSCL (228 aa). Residues 360–388 are a coiled coil; that stretch reads VETTAVQEFQNQMKQLQSKYQSQDEKLWK. The Perinuclear space segment spans residues 361 to 583; the sequence is ETTAVQEFQN…ENALKAGSCL (223 aa). N399 is a glycosylation site (N-linked (GlcNAc...) asparagine).

This sequence belongs to the TOR1AIP family. In terms of assembly, interacts with ATP1B4. Interacts with TOR1A (ATP-bound). Interacts with TOR1B, TOR2A and TOR3A. Interacts with VIM.

The protein resides in the nucleus inner membrane. In terms of biological role, required for nuclear membrane integrity. Induces TOR1A and TOR1B ATPase activity and is required for their location on the nuclear membrane. Binds to A- and B-type lamins. Possible role in membrane attachment and assembly of the nuclear lamina. The chain is Torsin-1A-interacting protein 1 (Tor1aip1) from Rattus norvegicus (Rat).